A 189-amino-acid polypeptide reads, in one-letter code: Putative manganese efflux pump MntP (189 aa).

6 consecutive transmembrane segments (helical) span residues 2–22 (SLTE…AVSI), 36–56 (ILQM…IGYY), 71–91 (WIAF…SITA), 106–126 (LLLV…VSLS), 132–152 (ILYS…AAIL), and 167–187 (IVGG…HMFF).

It belongs to the MntP (TC 9.B.29) family.

It is found in the cell membrane. In terms of biological role, probably functions as a manganese efflux pump. This chain is Putative manganese efflux pump MntP, found in Ruminiclostridium cellulolyticum (strain ATCC 35319 / DSM 5812 / JCM 6584 / H10) (Clostridium cellulolyticum).